The chain runs to 232 residues: Recombination protein RecR (232 aa).

The segment at 92–107 (CQVCFHLSAEPVCDIC) adopts a C4-type zinc-finger fold. In terms of domain architecture, Toprim spans 115–209 (SVICVVSDPR…KVTRIAFGLP (95 aa)).

The protein belongs to the RecR family.

May play a role in DNA repair. It seems to be involved in an RecBC-independent recombinational process of DNA repair. It may act with RecF and RecO. In Synechocystis sp. (strain ATCC 27184 / PCC 6803 / Kazusa), this protein is Recombination protein RecR.